A 605-amino-acid polypeptide reads, in one-letter code: Arginyl-tRNA--protein transferase 2 (605 aa).

Low complexity predominate over residues 496-513; that stretch reads KVSSSSSSPQASETLLES. The disordered stretch occupies residues 496 to 549; sequence KVSSSSSSPQASETLLESTSEHEDMEQGDTNDDDDEMYNSDEDSDSDSSSSRNR. Acidic residues predominate over residues 518-541; that stretch reads EDMEQGDTNDDDDEMYNSDEDSDS.

It belongs to the R-transferase family.

The enzyme catalyses an N-terminal L-alpha-aminoacyl-[protein] + L-arginyl-tRNA(Arg) = an N-terminal L-arginyl-L-aminoacyl-[protein] + tRNA(Arg) + H(+). In terms of biological role, involved in the post-translational conjugation of arginine to the N-terminal aspartate or glutamate of a protein. This arginylation is required for degradation of the protein via the ubiquitin pathway. Component of the N-end rule pathway with ATE1 and PRT6. The N-end rule pathway regulates seed after-ripening, seedling sugar sensitivity, seedling lipid breakdown, and abscisic acid (ABA) sensitivity of germination. The end-rule pathway regulates various aspects of leaf and shoot development. Involved in the oxygen-dependent N-arginylation of RAP2-12, an activator of hypoxic gene expression. This N-terminal modification leads to ubiquitination by PRT6 and subsequent degradation of RAP2-12 under aerobic conditions. Involved in disease resistance. The end-rule pathway plays a role in regulating the timing and amplitude of the immune response following infection with the bacterial pathogen Pseudomonas syringae pv tomato. Regulates the biosynthesis of plant-defense metabolites such as glucosinolates, and the biosynthesis and response to the phytohormone jasmonate (JA), which plays a key role in plant immunity. This chain is Arginyl-tRNA--protein transferase 2, found in Arabidopsis thaliana (Mouse-ear cress).